The following is a 507-amino-acid chain: L-threonine dehydratase biosynthetic IlvA (507 aa).

Residue Lys52 is modified to N6-(pyridoxal phosphate)lysine. Residues Asn79, 182–186 (GGGGL), and Ser309 contribute to the pyridoxal 5'-phosphate site. 2 ACT-like domains span residues 333–404 (AVFA…DLTH) and 427–498 (RLFR…EESA).

It belongs to the serine/threonine dehydratase family. Homotetramer. Pyridoxal 5'-phosphate serves as cofactor.

It catalyses the reaction L-threonine = 2-oxobutanoate + NH4(+). Its pathway is amino-acid biosynthesis; L-isoleucine biosynthesis; 2-oxobutanoate from L-threonine: step 1/1. In terms of biological role, catalyzes the anaerobic formation of alpha-ketobutyrate and ammonia from threonine in a two-step reaction. The first step involved a dehydration of threonine and a production of enamine intermediates (aminocrotonate), which tautomerizes to its imine form (iminobutyrate). Both intermediates are unstable and short-lived. The second step is the nonenzymatic hydrolysis of the enamine/imine intermediates to form 2-ketobutyrate and free ammonia. In the low water environment of the cell, the second step is accelerated by RidA. This is L-threonine dehydratase biosynthetic IlvA (ilvA) from Burkholderia multivorans (strain ATCC 17616 / 249).